We begin with the raw amino-acid sequence, 144 residues long: Large ribosomal subunit protein uL16 (144 aa).

Residues 1-19 are compositionally biased toward basic residues; sequence MLLPKRVKYRRQHRPKTTG. The interval 1 to 23 is disordered; sequence MLLPKRVKYRRQHRPKTTGRSKG.

This sequence belongs to the universal ribosomal protein uL16 family. In terms of assembly, part of the 50S ribosomal subunit.

Functionally, binds 23S rRNA and is also seen to make contacts with the A and possibly P site tRNAs. The sequence is that of Large ribosomal subunit protein uL16 from Staphylococcus carnosus (strain TM300).